A 152-amino-acid chain; its full sequence is Protein ripply3 (152 aa).

The span at 1–24 (MRPEAAGVREARGRLCHCPGDDPG) shows a compositional bias: basic and acidic residues. Disordered stretches follow at residues 1-76 (MRPE…GAFG) and 113-152 (FYND…ERAE). A WRPW motif motif is present at residues 40 to 43 (WRPW). The ripply homology domain stretch occupies residues 79–114 (HPVRLYLPVSKRQEYLQSSGEKVLASFPVQATIHFY). Positions 116-130 (DDSESGSEEEQEEEA) are enriched in acidic residues. Positions 140 to 152 (AEVRDSAQEERAE) are enriched in basic and acidic residues.

It belongs to the ripply family. In terms of assembly, interacts with TBX1.

It localises to the nucleus. Acts as a transcriptional corepressor. Negative regulator of the transcriptional activity of TBX1. Plays a role in the development of the pharyngeal apparatus and derivatives. The polypeptide is Protein ripply3 (Ripply3) (Mus musculus (Mouse)).